The sequence spans 232 residues: Phosphatidylserine decarboxylase proenzyme (232 aa).

The Schiff-base intermediate with substrate; via pyruvic acid role is filled by Ser190. Ser190 is subject to Pyruvic acid (Ser); by autocatalysis.

It belongs to the phosphatidylserine decarboxylase family. PSD-A subfamily. Heterodimer of a large membrane-associated beta subunit and a small pyruvoyl-containing alpha subunit. Pyruvate serves as cofactor. In terms of processing, is synthesized initially as an inactive proenzyme. Formation of the active enzyme involves a self-maturation process in which the active site pyruvoyl group is generated from an internal serine residue via an autocatalytic post-translational modification. Two non-identical subunits are generated from the proenzyme in this reaction, and the pyruvate is formed at the N-terminus of the alpha chain, which is derived from the carboxyl end of the proenzyme. The post-translation cleavage follows an unusual pathway, termed non-hydrolytic serinolysis, in which the side chain hydroxyl group of the serine supplies its oxygen atom to form the C-terminus of the beta chain, while the remainder of the serine residue undergoes an oxidative deamination to produce ammonia and the pyruvoyl prosthetic group on the alpha chain.

The protein resides in the cell membrane. The enzyme catalyses a 1,2-diacyl-sn-glycero-3-phospho-L-serine + H(+) = a 1,2-diacyl-sn-glycero-3-phosphoethanolamine + CO2. It participates in phospholipid metabolism; phosphatidylethanolamine biosynthesis; phosphatidylethanolamine from CDP-diacylglycerol: step 2/2. Catalyzes the formation of phosphatidylethanolamine (PtdEtn) from phosphatidylserine (PtdSer). The sequence is that of Phosphatidylserine decarboxylase proenzyme from Bartonella henselae (strain ATCC 49882 / DSM 28221 / CCUG 30454 / Houston 1) (Rochalimaea henselae).